A 388-amino-acid polypeptide reads, in one-letter code: Amylovoran biosynthesis protein AmsL (388 aa).

The next 6 membrane-spanning stretches (helical) occupy residues 24–44 (VLLSMLTGLLLVAIAWPISWF), 47–67 (LPQLGGLIMLTSLNFLVLGSL), 97–117 (FTVILLYYSPLGVSAVILGLF), 231–251 (FVIMLFSAIMYLAIGILSPVI), 297–317 (FYWNVVASIIVVLVLASVWIW), and 359–379 (ISVSAVFVGIIALVSHYNLFI).

Belongs to the polysaccharide synthase family.

It is found in the cell membrane. Its pathway is glycan metabolism; exopolysaccharide biosynthesis. Functionally, involved in the biosynthesis of amylovoran which functions as a virulence factor. This chain is Amylovoran biosynthesis protein AmsL (amsL), found in Erwinia amylovora (Fire blight bacteria).